Consider the following 139-residue polypeptide: uncharacterized protein (139 aa).

The helical transmembrane segment at 77 to 97 (YCFFFFLVLFLNGIIATRGKA) threads the bilayer.

It is found in the mitochondrion membrane. This is an uncharacterized protein from Arabidopsis thaliana (Mouse-ear cress).